The following is a 483-amino-acid chain: Protein disulfide-isomerase 5-3 (483 aa).

Residues Asn53, Asn74, and Asn99 are each glycosylated (N-linked (GlcNAc...) asparagine). One can recognise a Thioredoxin domain in the interval Glu133–Ala263. Cys170 functions as the Nucleophile in the catalytic mechanism. 3 N-linked (GlcNAc...) asparagine glycosylation sites follow: Asn279, Asn326, and Asn376. Residues Phe442–Ile462 traverse the membrane as a helical segment.

Belongs to the protein disulfide isomerase family. As to expression, widely expressed.

The protein resides in the membrane. In terms of biological role, acts as a protein-folding catalyst that interacts with nascent polypeptides to catalyze the formation, isomerization, and reduction or oxidation of disulfide bonds. This Arabidopsis thaliana (Mouse-ear cress) protein is Protein disulfide-isomerase 5-3 (PDIL5-3).